Reading from the N-terminus, the 249-residue chain is Transmembrane protein 150C (249 aa).

Topologically, residues 1 to 9 (MDGKKCSVW) are cytoplasmic. The chain crosses the membrane as a helical span at residues 10 to 30 (MFLPLVFTLFTSAGLWIVYFI). Residues 31-64 (AVEDDKILPLNSAARKSGVKHAPYISFAGDDPPA) lie on the Extracellular side of the membrane. Residues 65-85 (SCVFSQVMNMAAFLALVVAVL) traverse the membrane as a helical segment. Residues 86–97 (RFIQLKPKVLNP) lie on the Cytoplasmic side of the membrane. Residues 98–118 (WLNISGLVALCLASFGMTLLG) form a helical membrane-spanning segment. Residues 119 to 130 (NFQLTNDEEIHN) are Extracellular-facing. A helical membrane pass occupies residues 131-151 (VGTSLTFGFGTLTCWIQAALT). Over 152 to 168 (LKVNIKNEGRRAGIPRV) the chain is Cytoplasmic. The chain crosses the membrane as a helical span at residues 169 to 189 (ILSAVITLCVVLYFILMAQDI). Topologically, residues 190–192 (HMY) are extracellular. Residues 193–213 (AARVQWGLVMCFLAYFGTLAV) traverse the membrane as a helical segment. The Cytoplasmic portion of the chain corresponds to 214 to 249 (EFRHYRYEIVCSEYQENFLSFSESLSEASEYQTDQV).

The protein belongs to the DRAM/TMEM150 family.

The protein localises to the cell membrane. The protein resides in the lysosome membrane. The catalysed reaction is Ca(2+)(in) = Ca(2+)(out). It carries out the reaction Na(+)(in) = Na(+)(out). It catalyses the reaction K(+)(in) = K(+)(out). The enzyme catalyses Mg(2+)(in) = Mg(2+)(out). In terms of biological role, nonselective cationic channel with high permeability to Ca(2+). Component of a mechanosensitive cation channel. Confers mechanically activated (MA) currents with slow inactivation kinetics. May contribute to proprioception. The sequence is that of Transmembrane protein 150C (Tmem150c) from Rattus norvegicus (Rat).